The following is a 115-amino-acid chain: MKVCRIHCALALLGLALAICSQGAASQPDLDLRSRRLLQRARAAAWPHRSGVSERWRTFYPNCPCLRPRKVKCPAGAKEDLRVELERSVGNPNNLPPRERKAGCKNFYWKGFTSC.

An N-terminal signal peptide occupies residues 1–18 (MKVCRIHCALALLGLALA). Positions 19 to 87 (ICSQGAASQP…KEDLRVELER (69 aa)) are excised as a propeptide. Cysteines 104 and 115 form a disulfide.

It belongs to the somatostatin family.

Its subcellular location is the secreted. Somatostatin inhibits the release of somatotropin. This Oncorhynchus mykiss (Rainbow trout) protein is Somatostatin-2 (sst2).